We begin with the raw amino-acid sequence, 377 residues long: Bacterial actin-related protein (377 aa).

This sequence belongs to the actin family.

Its function is as follows. May be a dominant-negative inhibitor of eukaryotic actin polymerization. This Haliangium ochraceum (strain DSM 14365 / JCM 11303 / SMP-2) protein is Bacterial actin-related protein (barP).